We begin with the raw amino-acid sequence, 123 residues long: Small ribosomal subunit protein uS12 (123 aa).

Asp-89 is subject to 3-methylthioaspartic acid.

This sequence belongs to the universal ribosomal protein uS12 family. In terms of assembly, part of the 30S ribosomal subunit. Contacts proteins S8 and S17. May interact with IF1 in the 30S initiation complex.

Functionally, with S4 and S5 plays an important role in translational accuracy. Interacts with and stabilizes bases of the 16S rRNA that are involved in tRNA selection in the A site and with the mRNA backbone. Located at the interface of the 30S and 50S subunits, it traverses the body of the 30S subunit contacting proteins on the other side and probably holding the rRNA structure together. The combined cluster of proteins S8, S12 and S17 appears to hold together the shoulder and platform of the 30S subunit. The chain is Small ribosomal subunit protein uS12 from Orientia tsutsugamushi (strain Boryong) (Rickettsia tsutsugamushi).